We begin with the raw amino-acid sequence, 739 residues long: Protein NPGR2 (739 aa).

Residues 32-71 (EQMRHREEEDKKSEVGVGRDYNGSSALSTAESENAKKLDN) form a disordered region. The segment covering 33-45 (QMRHREEEDKKSE) has biased composition (basic and acidic residues). Residues 53 to 63 (NGSSALSTAES) show a composition bias toward polar residues. 9 TPR repeats span residues 90–127 (EEARALLGRIEYQKGNIEAALRVFEGIDINGITVKMKT), 162–195 (FEAIFLKAKSLQRLGRFQEAAESCRVILDIVETS), 215–248 (TKAVELLPELWKLADSPRDAILSYRRALLNHWKL), 465–498 (PRVVHRLALENAEQRKLDSALAYAKEALKLGAES), 500–533 (LEVWLLLARVLSAQKRFSDAETIVDAALNETGKW), 536–569 (GKLLRLKAKLRLAKGEVKDAIKTYTQLLALLQVQ), 592–625 (LGTWHDLAHIYINLSQWRDAESCLSRSRLIAPYS), 626–659 (SVRYHIEGVLYNRRGQLEEAMEAFTTALDIDPMH), and 697–733 (HSAWYNLGKMFKAEGSVSSMQEAVECFQAAVTLEETM).

As to quaternary structure, interacts with calmodulin in a calcium-dependent manner. In terms of tissue distribution, expressed in pollen, flowers and fruits.

This Arabidopsis thaliana (Mouse-ear cress) protein is Protein NPGR2.